A 478-amino-acid chain; its full sequence is Muscarinic acetylcholine receptor M4 (478 aa).

Topologically, residues 1 to 30 (MXNFTPVNGSSANQSVRLVTAAHNHLETVE) are extracellular. N-linked (GlcNAc...) asparagine glycans are attached at residues N8 and N13. The helical transmembrane segment at 31 to 53 (MVFIATVTGSLSLVTVVGNILVM) threads the bilayer. Over 54–67 (LSIKVNRQLQTVNN) the chain is Cytoplasmic. The chain crosses the membrane as a helical span at residues 68 to 88 (YFLFSLGCADLIIGAFSMNLY). Residues 89-105 (TLYIIKGYWPLGAVVCD) lie on the Extracellular side of the membrane. An intrachain disulfide couples C104 to C184. The helical transmembrane segment at 106-127 (LWLALDYVVSNASVMNLLIISF) threads the bilayer. Residues 128–147 (DRYFCVTKPLTYPARRTTKM) are Cytoplasmic-facing. A helical membrane pass occupies residues 148–170 (AGLMIAAAWVLSFVLWAPAILFW). Residues 171 to 192 (QFVVGKRTVPDNQCFIQFLSNP) are Extracellular-facing. Residues 193–215 (AVTFGTAIAAFYLPVVIMTVLYI) form a helical membrane-spanning segment. The Cytoplasmic segment spans residues 216-400 (HISLASRSRV…AARERKVTRT (185 aa)). The interval 271 to 333 (LEEAPPPALP…APTLQPRTLN (63 aa)) is disordered. Over residues 274-285 (APPPALPPPPRP) the composition is skewed to pro residues. Residues 293–303 (NESSSGSATQN) show a composition bias toward polar residues. The segment covering 310–332 (TELSTAEATTPALPAPTLQPRTL) has biased composition (low complexity). Residues 401–421 (IFAILLAFILTWTPYNVMVLV) form a helical membrane-spanning segment. Topologically, residues 422–435 (NTFCQSCIPERVWS) are extracellular. Residues 436–455 (IGYWLCYVNSTINPACYALC) form a helical membrane-spanning segment. The Cytoplasmic portion of the chain corresponds to 456 to 478 (NATFKKTFRHLLLCQYRNIGTAR). T458, T462, and T476 each carry phosphothreonine.

Belongs to the G-protein coupled receptor 1 family. Muscarinic acetylcholine receptor subfamily. CHRM4 sub-subfamily.

It localises to the cell membrane. It is found in the postsynaptic cell membrane. Functionally, the muscarinic acetylcholine receptor mediates various cellular responses, including inhibition of adenylate cyclase, breakdown of phosphoinositides and modulation of potassium channels through the action of G proteins. Primary transducing effect is inhibition of adenylate cyclase. This Rattus norvegicus (Rat) protein is Muscarinic acetylcholine receptor M4 (Chrm4).